Here is a 126-residue protein sequence, read N- to C-terminus: MLLNMLKCKLHRARVTHAELHYEGSCGIDGDLLDLAGLRENESIDIYNVTNGKRFRTYAIRAEAGSGIISLNGAAAHMADLGDIVIICAYAHFDEVEASTYQPRLVYCNEDNTVKDTANIIPVQVA.

The active-site Schiff-base intermediate with substrate; via pyruvic acid is the S25. S25 is modified (pyruvic acid (Ser)). A substrate-binding site is contributed by T57. Y58 serves as the catalytic Proton donor. 73-75 (GAA) contacts substrate.

Belongs to the PanD family. As to quaternary structure, heterooctamer of four alpha and four beta subunits. Pyruvate is required as a cofactor. Is synthesized initially as an inactive proenzyme, which is activated by self-cleavage at a specific serine bond to produce a beta-subunit with a hydroxyl group at its C-terminus and an alpha-subunit with a pyruvoyl group at its N-terminus.

The protein resides in the cytoplasm. It carries out the reaction L-aspartate + H(+) = beta-alanine + CO2. It participates in cofactor biosynthesis; (R)-pantothenate biosynthesis; beta-alanine from L-aspartate: step 1/1. In terms of biological role, catalyzes the pyruvoyl-dependent decarboxylation of aspartate to produce beta-alanine. In Psychrobacter arcticus (strain DSM 17307 / VKM B-2377 / 273-4), this protein is Aspartate 1-decarboxylase.